Here is a 144-residue protein sequence, read N- to C-terminus: uncharacterized protein (144 aa).

The next 4 helical transmembrane spans lie at 27 to 47, 49 to 69, 83 to 103, and 106 to 126; these read VVCALAELVGVLLIDIDIPDI, LLPIDILAIDDIVDANVLLAL, IVLLALDIASMLIDAILDATV, and ALDMASIFMLLPIFIPSILNV.

Its subcellular location is the membrane. This is an uncharacterized protein from Saccharomyces cerevisiae (strain ATCC 204508 / S288c) (Baker's yeast).